The sequence spans 361 residues: Ribosomal RNA large subunit methyltransferase M (361 aa).

S-adenosyl-L-methionine contacts are provided by residues Ser-187, 220–223 (CPGG), Asp-239, Asp-259, and Asp-276. Residue Lys-305 is the Proton acceptor of the active site.

It belongs to the class I-like SAM-binding methyltransferase superfamily. RNA methyltransferase RlmE family. RlmM subfamily. As to quaternary structure, monomer.

It localises to the cytoplasm. It catalyses the reaction cytidine(2498) in 23S rRNA + S-adenosyl-L-methionine = 2'-O-methylcytidine(2498) in 23S rRNA + S-adenosyl-L-homocysteine + H(+). Functionally, catalyzes the 2'-O-methylation at nucleotide C2498 in 23S rRNA. This is Ribosomal RNA large subunit methyltransferase M from Shewanella sp. (strain W3-18-1).